An 845-amino-acid chain; its full sequence is Protein P (845 aa).

Positions 1-179 are terminal protein domain (TP); it reads MPLSYQHFRK…FCGSPYSWEQ (179 aa). Residues 180 to 348 form a spacer region; sequence ELHHGRSVTK…YCLSHLVNLL (169 aa). Disordered regions lie at residues 186 to 205, 222 to 245, and 288 to 318; these read SVTKTSQRHGDESFCSQPSG, QPRLGLQPHQGPLATSQSGRSGSI, and YSHLSTSKRQSSSGHAVEFHKVPPNSARSQS. Over residues 289-301 the composition is skewed to polar residues; that stretch reads SHLSTSKRQSSSG. Residues 349-692 are polymerase/reverse transcriptase domain (RT); sequence EDWGPCADHG…YMNLYPVARQ (344 aa). Residues 359–602 form the Reverse transcriptase domain; that stretch reads EHHIRIPRTP…YSLNFMGYII (244 aa). Residues Asp431, Asp553, and Asp554 each contribute to the Mg(2+) site.

Belongs to the hepadnaviridae P protein family.

It carries out the reaction DNA(n) + a 2'-deoxyribonucleoside 5'-triphosphate = DNA(n+1) + diphosphate. It catalyses the reaction Endonucleolytic cleavage to 5'-phosphomonoester.. With respect to regulation, activated by host HSP70 and HSP40 in vitro to be able to bind the epsilon loop of the pgRNA. Because deletion of the RNase H region renders the protein partly chaperone-independent, the chaperones may be needed indirectly to relieve occlusion of the RNA-binding site by this domain. Inhibited by several reverse-transcriptase inhibitors: Lamivudine, Adefovir and Entecavir. Functionally, multifunctional enzyme that converts the viral RNA genome into dsDNA in viral cytoplasmic capsids. This enzyme displays a DNA polymerase activity that can copy either DNA or RNA templates, and a ribonuclease H (RNase H) activity that cleaves the RNA strand of RNA-DNA heteroduplexes in a partially processive 3'- to 5'-endonucleasic mode. Neo-synthesized pregenomic RNA (pgRNA) are encapsidated together with the P protein, and reverse-transcribed inside the nucleocapsid. Initiation of reverse-transcription occurs first by binding the epsilon loop on the pgRNA genome, and is initiated by protein priming, thereby the 5'-end of (-)DNA is covalently linked to P protein. Partial (+)DNA is synthesized from the (-)DNA template and generates the relaxed circular DNA (RC-DNA) genome. After budding and infection, the RC-DNA migrates in the nucleus, and is converted into a plasmid-like covalently closed circular DNA (cccDNA). The activity of P protein does not seem to be necessary for cccDNA generation, and is presumably released from (+)DNA by host nuclear DNA repair machinery. This Hepatitis B virus genotype A3 (isolate Cameroon/CMR711/1994) (HBV-A) protein is Protein P.